We begin with the raw amino-acid sequence, 240 residues long: DNA repair protein RecO (240 aa).

It belongs to the RecO family.

Its function is as follows. Involved in DNA repair and RecF pathway recombination. This chain is DNA repair protein RecO, found in Wolbachia sp. subsp. Drosophila simulans (strain wRi).